Reading from the N-terminus, the 473-residue chain is Suppressor of SWI4 1 homolog (473 aa).

The region spanning 29–292 (PHSFVFTRGC…LIKVQEGVGE (264 aa)) is the Brix domain. Residues Ser-238 and Ser-240 each carry the phosphoserine modification. Residues 323–473 (AQRQAQQAQN…GRGRPGKRVA (151 aa)) form a disordered region. Residues 324–334 (QRQAQQAQNVQ) are compositionally biased toward low complexity. Basic and acidic residues predominate over residues 335–352 (RKQEQREAHRKKSLEGMK). At Ser-359 the chain carries Phosphoserine. Residues 375 to 388 (LGEDDDEQEDDDIE) are compositionally biased toward acidic residues. Basic residues predominate over residues 409 to 421 (KRLAKSPGRKRKR). Positions 422–443 (WEMDRGRGRLCDQKFPKTKDKS) are enriched in basic and acidic residues. Lys-438 carries the N6-acetyllysine modification. The segment covering 462 to 473 (GRGRGRPGKRVA) has biased composition (basic residues).

As to expression, widely expressed.

The protein resides in the nucleus. It is found in the nucleolus. May have a role in cell growth. This is Suppressor of SWI4 1 homolog (PPAN) from Homo sapiens (Human).